The following is a 508-amino-acid chain: Lysine--tRNA ligase (508 aa).

2 residues coordinate Mg(2+): Glu-418 and Glu-425.

The protein belongs to the class-II aminoacyl-tRNA synthetase family. As to quaternary structure, homodimer. The cofactor is Mg(2+).

The protein localises to the cytoplasm. The catalysed reaction is tRNA(Lys) + L-lysine + ATP = L-lysyl-tRNA(Lys) + AMP + diphosphate. This Burkholderia pseudomallei (strain 668) protein is Lysine--tRNA ligase.